Reading from the N-terminus, the 314-residue chain is MIOREX complex component 8 (314 aa).

Residues threonine 132–leucine 312 form the EngB-type G domain. GTP is bound by residues glycine 140–serine 147, glycine 173–threonine 177, aspartate 191–glycine 194, threonine 253–aspartate 256, and serine 290–threonine 292. Residues serine 147 and threonine 175 each contribute to the Mg(2+) site.

Belongs to the TRAFAC class TrmE-Era-EngA-EngB-Septin-like GTPase superfamily. EngB GTPase family. As to quaternary structure, associates with the mitochondrial ribosome. The cofactor is Mg(2+). Post-translationally, sumoylated upon ethanol stress.

It localises to the mitochondrion. In terms of biological role, component of MIOREX complexes, large expressome-like assemblies of ribosomes with factors involved in all the steps of post-transcriptional gene expression. The polypeptide is MIOREX complex component 8 (Saccharomyces cerevisiae (strain ATCC 204508 / S288c) (Baker's yeast)).